Reading from the N-terminus, the 299-residue chain is Acetaldehyde dehydrogenase (299 aa).

Cys-126 acts as the Acyl-thioester intermediate in catalysis. NAD(+) is bound by residues Ser-157 to Asn-165 and Asn-267.

The protein belongs to the acetaldehyde dehydrogenase family.

The enzyme catalyses acetaldehyde + NAD(+) + CoA = acetyl-CoA + NADH + H(+). The polypeptide is Acetaldehyde dehydrogenase (mhpF) (Carboxydothermus hydrogenoformans (strain ATCC BAA-161 / DSM 6008 / Z-2901)).